Reading from the N-terminus, the 1319-residue chain is E3 ubiquitin-protein ligase NEDD4 (1319 aa).

A2 is modified (N-acetylalanine). The tract at residues 204 to 229 is disordered; that stretch reads GNLPSDSTSNRSVPNRNTTPCEIFSR. The span at 207–229 shows a compositional bias: polar residues; the sequence is PSDSTSNRSVPNRNTTPCEIFSR. Residue S576 is modified to Phosphoserine. A mediates interaction with TNIK region spans residues 578–981; that stretch reads DDNAEQAEEL…LEDSYRRIMG (404 aa). The region spanning 610–643 is the WW 1 domain; that stretch reads SPLPPGWEERQDILGRTYYVNHESRRTQWKRPTP. T648 carries the phosphothreonine modification. Position 670 is a phosphoserine (S670). Residues 716 to 726 carry the Nuclear export signal motif; the sequence is LAEELNARLTI. Phosphoserine is present on residues S742 and S747. Disordered stretches follow at residues 755–780 and 796–834; these read EQPT…QDER and TKPT…VTQP. One can recognise a WW 2 domain in the interval 767 to 800; it reads SGLPPGWEEKQDERGRSYYVDHNSRTTTWTKPTV. A compositionally biased stretch (polar residues) spans 796-809; that stretch reads TKPTVQATVETSQL. The span at 810–825 shows a compositional bias: low complexity; that stretch reads TSSQSSAGPQSQASTS. 2 WW domains span residues 840-873 and 892-925; these read GFLP…DPRL and GPLP…DPRL. One can recognise an HECT domain in the interval 984-1318; the sequence is RADFLKARLW…IENTQGFDGV (335 aa). Residue K1279 forms a Glycyl lysine isopeptide (Lys-Gly) (interchain with G-Cter in ubiquitin) linkage. The Glycyl thioester intermediate role is filled by C1286.

Binds, in vitro, through the WW2 and WW3 domains, to neural isoforms of ENAH that contain the PPSY motif. Interacts with BEAN1, LITAF, RNF11, WBP1, WBP2, PMEPAI and PRRG2. Interacts with NDFIP1 and NDFIP2; this interaction activates the E3 ubiquitin-protein ligase and may induce its recruitment to exosomes. Interacts with UBE2D2. Interaction with PTEN is questionable according to PubMed:18562292. Interacts (via C2 domain) with GRB10 (via SH2 domain). Interacts with ERBB4. Interacts with TNIK; the interaction is direct, allows the TNIK-dependent recruitment of RAP2A and its ubiquitination by NEDD4. Interacts (via WW3 domain) with TNK2; EGF promotes this interaction. Interacts (via WW3 domain) with FGFR1 (via C-terminus). Interacts with OTUD7B. Interacts with ISG15. Interacts (via WW domain) with RAPGEF2; this interaction leads to ubiquitination and degradation via the proteasome pathway. Interacts (via WW domains) with ARRDC3 (via PPXY motifs). Interacts with LAPTM4B; may play a role in the lysosomal sorting of LAPTM4B. Interacts (via WW domains) with ARRDC1, ARRDC2 and ARRDC3. Interacts with ZBTB7B. Interacts with PRRG4 (via cytoplasmic domain). Interacts directly with LDLRAD3; this interaction promotes NEDD4 auto-ubiquitination. Interacts with ADRB2. Interacts (via WW domains) with DAZAP2 (via PPAY motif). Interacts with USP13. In terms of assembly, (Microbial infection) Interacts with viral proteins that contain a late-budding motif P-P-P-Y. This interaction is essential for viral particle budding of many retroviruses, like HTLV-1 Gag and MLV Gag. Interacts with Herpes simplex virus 2 (HHV-2) protein UL56; this interaction induces NEDD4 degradation. Interacts with Ebola virus protein VP40. In terms of processing, undergoes 'Lys-29'-linked auto-ubiquitination at Lys-1279 and serves as a scaffold for recruiting USP13 to form an NEDD4-USP13 deubiquitination complex.

It localises to the cytoplasm. Its subcellular location is the nucleus. The protein resides in the cell membrane. The enzyme catalyses S-ubiquitinyl-[E2 ubiquitin-conjugating enzyme]-L-cysteine + [acceptor protein]-L-lysine = [E2 ubiquitin-conjugating enzyme]-L-cysteine + N(6)-ubiquitinyl-[acceptor protein]-L-lysine.. It functions in the pathway protein modification; protein ubiquitination. Activated by NDFIP1- and NDFIP2-binding. Its function is as follows. E3 ubiquitin-protein ligase which accepts ubiquitin from an E2 ubiquitin-conjugating enzyme in the form of a thioester and then directly transfers the ubiquitin to targeted substrates. Specifically ubiquitinates 'Lys-63' in target proteins. Involved in the pathway leading to the degradation of VEGFR-2/KDFR, independently of its ubiquitin-ligase activity. Monoubiquitinates IGF1R at multiple sites, thus leading to receptor internalization and degradation in lysosomes. Ubiquitinates FGFR1, leading to receptor internalization and degradation in lysosomes. Promotes ubiquitination of RAPGEF2. According to PubMed:18562292 the direct link between NEDD4 and PTEN regulation through polyubiquitination described in PubMed:17218260 is questionable. Involved in ubiquitination of ERBB4 intracellular domain E4ICD. Part of a signaling complex composed of NEDD4, RAP2A and TNIK which regulates neuronal dendrite extension and arborization during development. Ubiquitinates TNK2 and regulates EGF-induced degradation of EGFR and TNF2. Ubiquitinates BRAT1 and this ubiquitination is enhanced in the presence of NDFIP1. Ubiquitinates DAZAP2, leading to its proteasomal degradation. Ubiquitinates POLR2A. Functions as a platform to recruit USP13 to form an NEDD4-USP13 deubiquitination complex that plays a critical role in cleaving the 'Lys-48'-linked ubiquitin chains of VPS34 and then stabilizing VPS34, thus promoting the formation of autophagosomes. In terms of biological role, (Microbial infection) Involved in the ubiquitination of Ebola virus protein VP40 which plays a role in viral budding. This is E3 ubiquitin-protein ligase NEDD4 (NEDD4) from Homo sapiens (Human).